The chain runs to 572 residues: Urease subunit alpha (572 aa).

The 437-residue stretch at 136–572 (GGIDTHIHFI…VPLGQRYFLF (437 aa)) folds into the Urease domain. 3 residues coordinate Ni(2+): His141, His143, and Lys224. At Lys224 the chain carries N6-carboxylysine. His226 provides a ligand contact to substrate. Residues His253 and His279 each contribute to the Ni(2+) site. Catalysis depends on His327, which acts as the Proton donor. Residue Asp367 participates in Ni(2+) binding.

The protein belongs to the metallo-dependent hydrolases superfamily. Urease alpha subunit family. In terms of assembly, heterotrimer of UreA (gamma), UreB (beta) and UreC (alpha) subunits. Three heterotrimers associate to form the active enzyme. Ni cation is required as a cofactor. Carboxylation allows a single lysine to coordinate two nickel ions.

It localises to the cytoplasm. The enzyme catalyses urea + 2 H2O + H(+) = hydrogencarbonate + 2 NH4(+). It participates in nitrogen metabolism; urea degradation; CO(2) and NH(3) from urea (urease route): step 1/1. The polypeptide is Urease subunit alpha (Haemophilus influenzae (strain PittGG)).